The primary structure comprises 164 residues: Protein-export protein SecB (164 aa).

Belongs to the SecB family. As to quaternary structure, homotetramer, a dimer of dimers. One homotetramer interacts with 1 SecA dimer.

The protein localises to the cytoplasm. In terms of biological role, one of the proteins required for the normal export of preproteins out of the cell cytoplasm. It is a molecular chaperone that binds to a subset of precursor proteins, maintaining them in a translocation-competent state. It also specifically binds to its receptor SecA. In Burkholderia orbicola (strain MC0-3), this protein is Protein-export protein SecB.